Reading from the N-terminus, the 249-residue chain is Imidazole glycerol phosphate synthase subunit HisF (249 aa).

Active-site residues include D11 and D130.

The protein belongs to the HisA/HisF family. Heterodimer of HisH and HisF.

It localises to the cytoplasm. The catalysed reaction is 5-[(5-phospho-1-deoxy-D-ribulos-1-ylimino)methylamino]-1-(5-phospho-beta-D-ribosyl)imidazole-4-carboxamide + L-glutamine = D-erythro-1-(imidazol-4-yl)glycerol 3-phosphate + 5-amino-1-(5-phospho-beta-D-ribosyl)imidazole-4-carboxamide + L-glutamate + H(+). Its pathway is amino-acid biosynthesis; L-histidine biosynthesis; L-histidine from 5-phospho-alpha-D-ribose 1-diphosphate: step 5/9. IGPS catalyzes the conversion of PRFAR and glutamine to IGP, AICAR and glutamate. The HisF subunit catalyzes the cyclization activity that produces IGP and AICAR from PRFAR using the ammonia provided by the HisH subunit. The sequence is that of Imidazole glycerol phosphate synthase subunit HisF from Sulfolobus acidocaldarius (strain ATCC 33909 / DSM 639 / JCM 8929 / NBRC 15157 / NCIMB 11770).